The chain runs to 133 residues: Ribosome-binding factor A (133 aa).

This sequence belongs to the RbfA family. As to quaternary structure, monomer. Binds 30S ribosomal subunits, but not 50S ribosomal subunits or 70S ribosomes.

The protein resides in the cytoplasm. Its function is as follows. One of several proteins that assist in the late maturation steps of the functional core of the 30S ribosomal subunit. Associates with free 30S ribosomal subunits (but not with 30S subunits that are part of 70S ribosomes or polysomes). Required for efficient processing of 16S rRNA. May interact with the 5'-terminal helix region of 16S rRNA. The protein is Ribosome-binding factor A of Chelativorans sp. (strain BNC1).